The following is a 194-amino-acid chain: MPKQTSGKYEKILQAAIEVISEKGLDKASISDIVKKAGTAQGTFYLYFSSKNALIPAIAENLLTHTLDQIKGRLHGDEDFWTVLDILIDETFLITERHKDIIVLCYSGLAIDHSMEKWETIYQPYYSWLEKIINKAIANHEVTEGINSKWTARTIINLVENTAERFYIGFEQDENVEVYKKEIFTFLKRSLGTA.

The HTH tetR-type domain maps to 6 to 66; that stretch reads SGKYEKILQA…AIAENLLTHT (61 aa). The segment at residues 29 to 48 is a DNA-binding region (H-T-H motif); that stretch reads SISDIVKKAGTAQGTFYLYF.

This is an uncharacterized protein from Bacillus subtilis (strain 168).